The primary structure comprises 488 residues: Kynurenine 3-monooxygenase 2 (488 aa).

It belongs to the aromatic-ring hydroxylase family. KMO subfamily. Requires FAD as cofactor.

It localises to the mitochondrion outer membrane. The catalysed reaction is L-kynurenine + NADPH + O2 + H(+) = 3-hydroxy-L-kynurenine + NADP(+) + H2O. It functions in the pathway cofactor biosynthesis; NAD(+) biosynthesis; quinolinate from L-kynurenine: step 1/3. In terms of biological role, catalyzes the hydroxylation of L-kynurenine (L-Kyn) to form 3-hydroxy-L-kynurenine (L-3OHKyn). Required for synthesis of quinolinic acid. This chain is Kynurenine 3-monooxygenase 2 (bna4-2), found in Aspergillus niger (strain ATCC MYA-4892 / CBS 513.88 / FGSC A1513).